A 448-amino-acid polypeptide reads, in one-letter code: Phosphoglucosamine mutase (448 aa).

The active-site Phosphoserine intermediate is serine 104. Residues serine 104, aspartate 245, aspartate 247, and aspartate 249 each coordinate Mg(2+). Residue serine 104 is modified to Phosphoserine.

Belongs to the phosphohexose mutase family. Mg(2+) is required as a cofactor. In terms of processing, activated by phosphorylation.

It catalyses the reaction alpha-D-glucosamine 1-phosphate = D-glucosamine 6-phosphate. Its function is as follows. Catalyzes the conversion of glucosamine-6-phosphate to glucosamine-1-phosphate. The sequence is that of Phosphoglucosamine mutase from Caulobacter vibrioides (strain ATCC 19089 / CIP 103742 / CB 15) (Caulobacter crescentus).